The chain runs to 101 residues: Small ribosomal subunit protein uS14 (101 aa).

It belongs to the universal ribosomal protein uS14 family. In terms of assembly, part of the 30S ribosomal subunit. Contacts proteins S3 and S10.

Functionally, binds 16S rRNA, required for the assembly of 30S particles and may also be responsible for determining the conformation of the 16S rRNA at the A site. The protein is Small ribosomal subunit protein uS14 of Polynucleobacter asymbioticus (strain DSM 18221 / CIP 109841 / QLW-P1DMWA-1) (Polynucleobacter necessarius subsp. asymbioticus).